The primary structure comprises 217 residues: uncharacterized protein (217 aa).

This is an uncharacterized protein from Methanothermobacter thermautotrophicus (Methanobacterium thermoformicicum).